A 248-amino-acid chain; its full sequence is Putative homeobox-leucine zipper protein HOX26 (248 aa).

The interval 50-118 is disordered; it reads KKVAAAAVVA…GDEEGASRKK (69 aa). Residues 79 to 89 show a composition bias toward basic residues; that stretch reads RQRRSCKKGRR. Positions 114 to 173 form a DNA-binding region, homeobox; sequence ASRKKLRLTGEQATLLEDSFRAHNILSHAEKQELAGKLGLSARQVEVWFQNRRARTKLKQ. Residues 172-216 form a leucine-zipper region; it reads KQTEADCDLLRRWCDHLAADNARLRRDLAELRRSSSSPPVSGLAV.

The protein belongs to the HD-ZIP homeobox family. Class II subfamily.

The protein localises to the nucleus. Probable transcription factor. The protein is Putative homeobox-leucine zipper protein HOX26 (HOX26) of Oryza sativa subsp. japonica (Rice).